The following is a 393-amino-acid chain: tRNA(Met) cytidine acetate ligase (393 aa).

Gly81, Asn142, and Arg167 together coordinate ATP.

Belongs to the TmcAL family.

It is found in the cytoplasm. It catalyses the reaction cytidine(34) in elongator tRNA(Met) + acetate + ATP = N(4)-acetylcytidine(34) in elongator tRNA(Met) + AMP + diphosphate. Catalyzes the formation of N(4)-acetylcytidine (ac(4)C) at the wobble position of elongator tRNA(Met), using acetate and ATP as substrates. First activates an acetate ion to form acetyladenylate (Ac-AMP) and then transfers the acetyl group to tRNA to form ac(4)C34. This is tRNA(Met) cytidine acetate ligase from Bacillus thuringiensis subsp. konkukian (strain 97-27).